The chain runs to 338 residues: MSSLRLLISDSYDPWFNLAVEECIFRQMSPDQRVLFLWRNADTVVIGRAQNPWKECNTRRMEQDGVKLARRSSGGGAVFHDLGNTCFTFMAGKPGYDKTISTQIILNALASLGIQATASGRNDLVVINGEDERKVSGSAYKETKDRGFHHGTLLLNADLSRLADYLNPDPKKLQAKGITSVRSRVTNLVELLPGIDHEKIRTAIEQAFFAYYDEQVSAEVISPQSLPNLPGFTEQFAKQSSWEWNFGQAPAFSHVVDTRFTWGGIELHFDVLHGAIDRCQIFTDSLNPTPLEALAQRLQGAAYRPDAIDKICQHWIDDFPELQTELQQACHWLVEVLR.

Positions 29–216 (SPDQRVLFLW…AFFAYYDEQV (188 aa)) constitute a BPL/LPL catalytic domain. Residues Arg-71, 76–79 (GAVF), and Lys-134 each bind ATP. Lys-134 is a (R)-lipoate binding site.

This sequence belongs to the LplA family. As to quaternary structure, monomer.

The protein resides in the cytoplasm. The enzyme catalyses L-lysyl-[lipoyl-carrier protein] + (R)-lipoate + ATP = N(6)-[(R)-lipoyl]-L-lysyl-[lipoyl-carrier protein] + AMP + diphosphate + H(+). It functions in the pathway protein modification; protein lipoylation via exogenous pathway; protein N(6)-(lipoyl)lysine from lipoate: step 1/2. Its pathway is protein modification; protein lipoylation via exogenous pathway; protein N(6)-(lipoyl)lysine from lipoate: step 2/2. In terms of biological role, catalyzes both the ATP-dependent activation of exogenously supplied lipoate to lipoyl-AMP and the transfer of the activated lipoyl onto the lipoyl domains of lipoate-dependent enzymes. This is Lipoate-protein ligase A from Yersinia pseudotuberculosis serotype IB (strain PB1/+).